The sequence spans 444 residues: MNVVVCSGGTATNSLTPCFSNISILKGHELTYILPISDNGGSTSEILRIVGGPAIGDIRSRIVRLLQDEQLVELFGHRLPNDKLLAKKEWNEIVEGSHPIWKNISIEVKEMCRSFIIHMQAELLKKIKHSNPFQFESASIGNFFLTGARLFLGSLDASIELMMRIGRCSPLVHVIPCINTNHTHHISALLTNGEMITGQSQISHPSKSVPKDNSIAHSAKFIHLLGSYDDHLKILLDDEEEEAEEEYANPIYILPELKNSQLHFDKLDESQNLPAPVHRILYINPYGEEIKPMGNPRAISKVKKADMVVYSIGSLMTSLLPILILGNLAEVILESNNTKKVLLINNKYDREVFGLDGLHYVQMIIDSMSRAIAGYRQSKGVHSENDDFEWQDFITDIVYLKNGEIEIDETIFEKHSIRCHQIASSDKMESEELEKVLNQIGLKN.

This is an uncharacterized protein from Saccharomyces cerevisiae (strain ATCC 204508 / S288c) (Baker's yeast).